The following is a 325-amino-acid chain: tRNA(Ile)-lysidine synthase (325 aa).

Position 35–40 (35–40 (SGGQDS)) interacts with ATP.

This sequence belongs to the tRNA(Ile)-lysidine synthase family.

The protein localises to the cytoplasm. The catalysed reaction is cytidine(34) in tRNA(Ile2) + L-lysine + ATP = lysidine(34) in tRNA(Ile2) + AMP + diphosphate + H(+). In terms of biological role, ligates lysine onto the cytidine present at position 34 of the AUA codon-specific tRNA(Ile) that contains the anticodon CAU, in an ATP-dependent manner. Cytidine is converted to lysidine, thus changing the amino acid specificity of the tRNA from methionine to isoleucine. This is tRNA(Ile)-lysidine synthase from Gloeobacter violaceus (strain ATCC 29082 / PCC 7421).